Reading from the N-terminus, the 75-residue chain is Metallothionein-like protein 1B (75 aa).

It belongs to the metallothionein superfamily. Type 15 family.

Functionally, metallothioneins have a high content of cysteine residues that bind various heavy metals. This chain is Metallothionein-like protein 1B (MT1B), found in Vicia faba (Broad bean).